A 357-amino-acid chain; its full sequence is Phosphoribosylformylglycinamidine cyclo-ligase (357 aa).

It belongs to the AIR synthase family.

The protein resides in the cytoplasm. The enzyme catalyses 2-formamido-N(1)-(5-O-phospho-beta-D-ribosyl)acetamidine + ATP = 5-amino-1-(5-phospho-beta-D-ribosyl)imidazole + ADP + phosphate + H(+). The protein operates within purine metabolism; IMP biosynthesis via de novo pathway; 5-amino-1-(5-phospho-D-ribosyl)imidazole from N(2)-formyl-N(1)-(5-phospho-D-ribosyl)glycinamide: step 2/2. The chain is Phosphoribosylformylglycinamidine cyclo-ligase from Rhizobium rhizogenes (strain K84 / ATCC BAA-868) (Agrobacterium radiobacter).